A 381-amino-acid polypeptide reads, in one-letter code: Hps1-dma1 cluster transcription factor tfc7 (381 aa).

A DNA-binding region (zn(2)-C6 fungal-type) is located at residues 10–37; that stretch reads CDHCSATKIKCTQERPQCTRCRALGRDC. The segment at 41 to 88 is disordered; that stretch reads RSLRAGKPPRSSQGLNRKISNAPVLPRQNTPVSNPTSMSSKPEHWPTM. Polar residues-rich tracts occupy residues 50–59 and 67–80; these read RSSQGLNRKI and RQNT…SMSS.

The protein resides in the nucleus. Functionally, transcription factor that regulates the expression of the hps1-dma1 gene cluster that probably mediates the biosynthesis a derivative of cyclopiazonic acid (CPA). Further studies are required to whether the CPA-like hps1-dma1 cluster is functional or a non-functional relic reflecting evolution of D.septosporum. In Dothistroma septosporum (strain NZE10 / CBS 128990) (Red band needle blight fungus), this protein is Hps1-dma1 cluster transcription factor tfc7 (tfc7).